Consider the following 778-residue polypeptide: uncharacterized protein (778 aa).

3 stretches are compositionally biased toward polar residues: residues 1 to 11 (MPISSPGTRCS), 18 to 34 (TLQQ…QSLG), and 41 to 51 (GSITENYVQDS). A disordered region spans residues 1-60 (MPISSPGTRCSSDLKDPTLQQYSAESVSTEQSLGTFEESKGSITENYVQDSSVDEHDDGN). 2 helical membrane passes run 356-381 (YILM…APII) and 401-423 (GFLA…GAHI).

The protein belongs to the TMCO4 family.

The protein resides in the golgi apparatus membrane. This is an uncharacterized protein from Schizosaccharomyces pombe (strain 972 / ATCC 24843) (Fission yeast).